A 341-amino-acid chain; its full sequence is Basic membrane protein D (341 aa).

Positions M1 to A16 are cleaved as a signal peptide. C17 carries N-palmitoyl cysteine lipidation. The S-diacylglycerol cysteine moiety is linked to residue C17.

The protein belongs to the BMP lipoprotein family. As to quaternary structure, monomer.

The protein localises to the cell inner membrane. In terms of biological role, binds adenosine and inosine. May be part of an ABC-type nucleoside uptake system involved in the purine salvage pathway. In Borreliella burgdorferi (strain JD1) (Borrelia burgdorferi), this protein is Basic membrane protein D.